A 292-amino-acid polypeptide reads, in one-letter code: ATP synthase gamma chain (292 aa).

The protein belongs to the ATPase gamma chain family. In terms of assembly, F-type ATPases have 2 components, CF(1) - the catalytic core - and CF(0) - the membrane proton channel. CF(1) has five subunits: alpha(3), beta(3), gamma(1), delta(1), epsilon(1). CF(0) has three main subunits: a, b and c.

The protein resides in the cell inner membrane. In terms of biological role, produces ATP from ADP in the presence of a proton gradient across the membrane. The gamma chain is believed to be important in regulating ATPase activity and the flow of protons through the CF(0) complex. The polypeptide is ATP synthase gamma chain (Bradyrhizobium sp. (strain ORS 278)).